We begin with the raw amino-acid sequence, 413 residues long: Multidrug resistance protein MdtA (413 aa).

The N-terminal stretch at 1–20 is a signal peptide; sequence MKGSNTFRWAIAIGVVVAAA. Disordered regions lie at residues 31 to 57 and 391 to 413; these read SPTAAPGVAAQAPHTAAAGRRGMRDGP and EPQTTMADEKSPSRHEGQKGARA. Basic and acidic residues predominate over residues 397-413; sequence ADEKSPSRHEGQKGARA.

The protein belongs to the membrane fusion protein (MFP) (TC 8.A.1) family. In terms of assembly, part of a tripartite efflux system composed of MdtA, MdtB and MdtC.

It is found in the cell inner membrane. The polypeptide is Multidrug resistance protein MdtA (Salmonella paratyphi C (strain RKS4594)).